Here is a 420-residue protein sequence, read N- to C-terminus: Phosphoribosylamine--glycine ligase (420 aa).

Residues lysine 108–histidine 314 form the ATP-grasp domain. Isoleucine 134–serine 195 contributes to the ATP binding site. Glutamate 284 and asparagine 286 together coordinate Mg(2+).

Belongs to the GARS family. The cofactor is Mg(2+). Mn(2+) is required as a cofactor.

The enzyme catalyses 5-phospho-beta-D-ribosylamine + glycine + ATP = N(1)-(5-phospho-beta-D-ribosyl)glycinamide + ADP + phosphate + H(+). Its pathway is purine metabolism; IMP biosynthesis via de novo pathway; N(1)-(5-phospho-D-ribosyl)glycinamide from 5-phospho-alpha-D-ribose 1-diphosphate: step 2/2. The polypeptide is Phosphoribosylamine--glycine ligase (Streptococcus suis).